A 331-amino-acid chain; its full sequence is 3-dehydroquinate synthase homolog (331 aa).

This sequence belongs to the archaeal-type DHQ synthase family.

This Aquifex aeolicus (strain VF5) protein is 3-dehydroquinate synthase homolog.